Consider the following 159-residue polypeptide: SsrA-binding protein (159 aa).

Residues 134–159 (KLHDKRETSKERDWNRQKNRLLKERG) are disordered. Residues 137-159 (DKRETSKERDWNRQKNRLLKERG) show a composition bias toward basic and acidic residues.

Belongs to the SmpB family.

The protein localises to the cytoplasm. Required for rescue of stalled ribosomes mediated by trans-translation. Binds to transfer-messenger RNA (tmRNA), required for stable association of tmRNA with ribosomes. tmRNA and SmpB together mimic tRNA shape, replacing the anticodon stem-loop with SmpB. tmRNA is encoded by the ssrA gene; the 2 termini fold to resemble tRNA(Ala) and it encodes a 'tag peptide', a short internal open reading frame. During trans-translation Ala-aminoacylated tmRNA acts like a tRNA, entering the A-site of stalled ribosomes, displacing the stalled mRNA. The ribosome then switches to translate the ORF on the tmRNA; the nascent peptide is terminated with the 'tag peptide' encoded by the tmRNA and targeted for degradation. The ribosome is freed to recommence translation, which seems to be the essential function of trans-translation. The protein is SsrA-binding protein of Rhizobium meliloti (strain 1021) (Ensifer meliloti).